We begin with the raw amino-acid sequence, 249 residues long: MADS-box transcription factor 18 (249 aa).

The MADS-box domain occupies 1 to 61 (MGRGPVQLRR…GKLYEFSSHS (61 aa)). Residues 88–179 (QENWGDEYGI…KLMETEKEKN (92 aa)) form the K-box domain. Residues 184–249 (NTNREEQNGA…PPWMLRTSHT (66 aa)) form a disordered region. Over residues 210-236 (PTTNNSQSQPRGSGESEAQPSPAQAGN) the composition is skewed to polar residues.

As to expression, widely expressed. Transcripts accumulate to higher levels in organs that retain meristematic characteristics: in the apical meristem and in the meristematic leaf primordia formed on its flank; in the developing panicle at the early stage of rachis-branch primordia differentiation; in the procambium of the rachis branches and in all floral organ primordia.

Its subcellular location is the nucleus. Probable transcription factor. This chain is MADS-box transcription factor 18 (MADS18), found in Oryza sativa subsp. indica (Rice).